A 386-amino-acid chain; its full sequence is Protein-glutamate methylesterase/protein-glutamine glutaminase 3 (386 aa).

The 118-residue stretch at 4–121 (KVLVVDDSGF…SRNPQKVKQL (118 aa)) folds into the Response regulatory domain. At Asp55 the chain carries 4-aspartylphosphate. Residues 132 to 194 (SNRRSSGFGS…SHAPAHPTTS (63 aa)) show a composition bias toward low complexity. Residues 132 to 197 (SNRRSSGFGS…PAHPTTSGTA (66 aa)) form a disordered region. A CheB-type methylesterase domain is found at 191–383 (PTTSGTAKRK…LDDIGRHLVE (193 aa)). Active-site residues include Ser210, His237, and Asp330.

Belongs to the CheB family. Post-translationally, phosphorylated by CheA. Phosphorylation of the N-terminal regulatory domain activates the methylesterase activity.

It localises to the cytoplasm. The enzyme catalyses [protein]-L-glutamate 5-O-methyl ester + H2O = L-glutamyl-[protein] + methanol + H(+). It catalyses the reaction L-glutaminyl-[protein] + H2O = L-glutamyl-[protein] + NH4(+). Involved in chemotaxis. Part of a chemotaxis signal transduction system that modulates chemotaxis in response to various stimuli. Catalyzes the demethylation of specific methylglutamate residues introduced into the chemoreceptors (methyl-accepting chemotaxis proteins or MCP) by CheR. Also mediates the irreversible deamidation of specific glutamine residues to glutamic acid. The sequence is that of Protein-glutamate methylesterase/protein-glutamine glutaminase 3 from Pseudomonas syringae pv. syringae (strain B728a).